The sequence spans 252 residues: Ureidoacrylate amidohydrolase RutB (252 aa).

Over residues 1–14 (MSTPARNTTLTSNT) the composition is skewed to polar residues. The interval 1–31 (MSTPARNTTLTSNTPAGAPRLPGAPAPQVLP) is disordered. Low complexity predominate over residues 15-27 (PAGAPRLPGAPAP). Aspartate 50 serves as the catalytic Proton acceptor. Residue lysine 159 is part of the active site. Cysteine 192 acts as the Nucleophile in catalysis.

Belongs to the isochorismatase family. RutB subfamily.

It carries out the reaction (Z)-3-ureidoacrylate + H2O + H(+) = (Z)-3-aminoacrylate + NH4(+) + CO2. The enzyme catalyses (Z)-3-ureidoacrylate + H2O = (Z)-3-aminoacrylate + carbamate + H(+). The catalysed reaction is (Z)-2-methylureidoacrylate + H2O + H(+) = (Z)-2-methylaminoacrylate + NH4(+) + CO2. Hydrolyzes ureidoacrylate to form aminoacrylate and carbamate. The carbamate hydrolyzes spontaneously, thereby releasing one of the nitrogen atoms of the pyrimidine ring as ammonia and one of its carbon atoms as CO2. The chain is Ureidoacrylate amidohydrolase RutB from Variovorax paradoxus (strain S110).